A 375-amino-acid chain; its full sequence is Queuine tRNA-ribosyltransferase (375 aa).

The active-site Proton acceptor is the Asp-89. Substrate-binding positions include Asp-89–Phe-93, Asp-143, Gln-187, and Gly-214. The tract at residues Gly-245–Asp-251 is RNA binding. Asp-264 functions as the Nucleophile in the catalytic mechanism. An RNA binding; important for wobble base 34 recognition region spans residues Thr-269–Arg-273. 4 residues coordinate Zn(2+): Cys-302, Cys-304, Cys-307, and His-333.

It belongs to the queuine tRNA-ribosyltransferase family. Homodimer. Within each dimer, one monomer is responsible for RNA recognition and catalysis, while the other monomer binds to the replacement base PreQ1. Requires Zn(2+) as cofactor.

It carries out the reaction 7-aminomethyl-7-carbaguanine + guanosine(34) in tRNA = 7-aminomethyl-7-carbaguanosine(34) in tRNA + guanine. Its pathway is tRNA modification; tRNA-queuosine biosynthesis. Functionally, catalyzes the base-exchange of a guanine (G) residue with the queuine precursor 7-aminomethyl-7-deazaguanine (PreQ1) at position 34 (anticodon wobble position) in tRNAs with GU(N) anticodons (tRNA-Asp, -Asn, -His and -Tyr). Catalysis occurs through a double-displacement mechanism. The nucleophile active site attacks the C1' of nucleotide 34 to detach the guanine base from the RNA, forming a covalent enzyme-RNA intermediate. The proton acceptor active site deprotonates the incoming PreQ1, allowing a nucleophilic attack on the C1' of the ribose to form the product. After dissociation, two additional enzymatic reactions on the tRNA convert PreQ1 to queuine (Q), resulting in the hypermodified nucleoside queuosine (7-(((4,5-cis-dihydroxy-2-cyclopenten-1-yl)amino)methyl)-7-deazaguanosine). The polypeptide is Queuine tRNA-ribosyltransferase (Aliivibrio fischeri (strain ATCC 700601 / ES114) (Vibrio fischeri)).